A 72-amino-acid chain; its full sequence is Guanine nucleotide-binding protein G(I)/G(S)/G(O) subunit gamma-12 (72 aa).

Ser-2 carries the N-acetylserine modification. Residues Ser-10 and Ser-26 each carry the phosphoserine modification. Tyr-42 bears the Phosphotyrosine mark. The residue at position 49 (Ser-49) is a Phosphoserine. Position 69 is a cysteine methyl ester (Cys-69). Residue Cys-69 is the site of S-geranylgeranyl cysteine attachment. Positions 70 to 72 (IIL) are cleaved as a propeptide — removed in mature form.

It belongs to the G protein gamma family. In terms of assembly, g proteins are composed of 3 units, alpha, beta and gamma.

The protein resides in the cell membrane. Guanine nucleotide-binding proteins (G proteins) are involved as a modulator or transducer in various transmembrane signaling systems. The beta and gamma chains are required for the GTPase activity, for replacement of GDP by GTP, and for G protein-effector interaction. This Mus musculus (Mouse) protein is Guanine nucleotide-binding protein G(I)/G(S)/G(O) subunit gamma-12 (Gng12).